Consider the following 395-residue polypeptide: NAD(P)H-quinone oxidoreductase subunit H, chloroplastic (395 aa).

Belongs to the complex I 49 kDa subunit family. In terms of assembly, NDH is composed of at least 16 different subunits, 5 of which are encoded in the nucleus.

Its subcellular location is the plastid. The protein resides in the chloroplast thylakoid membrane. It carries out the reaction a plastoquinone + NADH + (n+1) H(+)(in) = a plastoquinol + NAD(+) + n H(+)(out). The catalysed reaction is a plastoquinone + NADPH + (n+1) H(+)(in) = a plastoquinol + NADP(+) + n H(+)(out). Functionally, NDH shuttles electrons from NAD(P)H:plastoquinone, via FMN and iron-sulfur (Fe-S) centers, to quinones in the photosynthetic chain and possibly in a chloroplast respiratory chain. The immediate electron acceptor for the enzyme in this species is believed to be plastoquinone. Couples the redox reaction to proton translocation, and thus conserves the redox energy in a proton gradient. The polypeptide is NAD(P)H-quinone oxidoreductase subunit H, chloroplastic (Dioscorea elephantipes (Elephant's foot yam)).